Here is a 134-residue protein sequence, read N- to C-terminus: ATP synthase epsilon chain (134 aa).

This sequence belongs to the ATPase epsilon chain family. F-type ATPases have 2 components, CF(1) - the catalytic core - and CF(0) - the membrane proton channel. CF(1) has five subunits: alpha(3), beta(3), gamma(1), delta(1), epsilon(1). CF(0) has three main subunits: a, b and c.

It is found in the cell membrane. In terms of biological role, produces ATP from ADP in the presence of a proton gradient across the membrane. The chain is ATP synthase epsilon chain from Staphylococcus aureus (strain USA300).